A 333-amino-acid chain; its full sequence is MNSSNLENLNYKSSIRDEVVPSRKKLTLPPWLEVAKPRLIPLLLATTLGGMALTEEWPLSSPKLICTLGGGALAAAAAGALNCLWEMELDKRMTRTSKRALPAGKLSSETVFLAAVSCTLAASMLLVSGVNYLAAGLTLLGLFSYVILYTVILKPRTTKNIVFGGVAGAIPPLVGASAATGHVGLSGWWLFGLVMLWTPAHFWALAILLKDDYASVGIPMLPSVKGSVFTAKAISRYGWATVLMSIMGVFALPEGGLLYGIMLLPFNGRLLQLINELKKSPDDLSRAKSLFRWSILYMFGICLLLLISRTQLSVEFEQQSMQIFLSIVSLLSN.

The next 7 membrane-spanning stretches (helical) occupy residues 64–84, 110–130, 133–153, 161–181, 189–209, 246–266, and 287–307; these read LICTLGGGALAAAAAGALNCL, TVFLAAVSCTLAASMLLVSGV, LAAGLTLLGLFSYVILYTVIL, IVFGGVAGAIPPLVGASAATG, WLFGLVMLWTPAHFWALAILL, IMGVFALPEGGLLYGIMLLPF, and AKSLFRWSILYMFGICLLLLI.

This sequence belongs to the UbiA prenyltransferase family. Protoheme IX farnesyltransferase subfamily.

The protein resides in the cell inner membrane. It carries out the reaction heme b + (2E,6E)-farnesyl diphosphate + H2O = Fe(II)-heme o + diphosphate. Its pathway is porphyrin-containing compound metabolism; heme O biosynthesis; heme O from protoheme: step 1/1. Functionally, converts heme B (protoheme IX) to heme O by substitution of the vinyl group on carbon 2 of heme B porphyrin ring with a hydroxyethyl farnesyl side group. The chain is Protoheme IX farnesyltransferase from Prochlorococcus marinus (strain AS9601).